Reading from the N-terminus, the 110-residue chain is UPF0060 membrane protein Nmul_A0351 (110 aa).

The next 4 membrane-spanning stretches (helical) occupy residues 7-27 (LFLF…PYLW), 33-53 (SAWL…LLTL), 63-83 (AAYG…VDGV), and 87-107 (AWDM…MFGP).

The protein belongs to the UPF0060 family.

It localises to the cell inner membrane. This chain is UPF0060 membrane protein Nmul_A0351, found in Nitrosospira multiformis (strain ATCC 25196 / NCIMB 11849 / C 71).